A 213-amino-acid polypeptide reads, in one-letter code: MTDQKLVTVIDYGMGNLRSVAKAAEHAADSNTRICISDKAEDIRSADAIIFPGQGAAKACMKALNETNITHALIQAATEKPFLGICMGLQVLMTHSQENEGVDCLDILKGDVQKFDLSGHPELKMPHMGWNQIHQTIDHPLWHNIEQNSRFYFVHSYFVSPHDKQIIAGETTHGKRFTSAIAQNNLFAIQAHPEKSADAGLQLFKNFLNWNGQ.

A Glutamine amidotransferase type-1 domain is found at 6–213 (LVTVIDYGMG…FKNFLNWNGQ (208 aa)). C86 functions as the Nucleophile in the catalytic mechanism. Catalysis depends on residues H192 and E194.

Heterodimer of HisH and HisF.

Its subcellular location is the cytoplasm. The catalysed reaction is 5-[(5-phospho-1-deoxy-D-ribulos-1-ylimino)methylamino]-1-(5-phospho-beta-D-ribosyl)imidazole-4-carboxamide + L-glutamine = D-erythro-1-(imidazol-4-yl)glycerol 3-phosphate + 5-amino-1-(5-phospho-beta-D-ribosyl)imidazole-4-carboxamide + L-glutamate + H(+). It carries out the reaction L-glutamine + H2O = L-glutamate + NH4(+). It functions in the pathway amino-acid biosynthesis; L-histidine biosynthesis; L-histidine from 5-phospho-alpha-D-ribose 1-diphosphate: step 5/9. Its function is as follows. IGPS catalyzes the conversion of PRFAR and glutamine to IGP, AICAR and glutamate. The HisH subunit catalyzes the hydrolysis of glutamine to glutamate and ammonia as part of the synthesis of IGP and AICAR. The resulting ammonia molecule is channeled to the active site of HisF. This Hydrogenovibrio crunogenus (strain DSM 25203 / XCL-2) (Thiomicrospira crunogena) protein is Imidazole glycerol phosphate synthase subunit HisH.